The chain runs to 312 residues: Bark storage protein B (312 aa).

Positions 1–24 are cleaved as a signal peptide; the sequence is MPQQSMQASLRDPIAEIERSNCKI. An N-linked (GlcNAc...) asparagine glycan is attached at asparagine 70.

The protein to wound-inducible poplar endochitinases. In terms of assembly, monomer. In terms of tissue distribution, bark tissue.

In terms of biological role, may play a role in nitrogen storage. The chain is Bark storage protein B (BSP) from Populus deltoides (Eastern poplar).